The chain runs to 678 residues: Sulfoquinovosidase (678 aa).

A 6-sulfo-alpha-D-quinovosyldiacylglycerol contacts are provided by Gln-288, Arg-301, Val-302, and Trp-304. The Nucleophile role is filled by Asp-405. Glu-408 is a catalytic residue. Asp-472 functions as the Proton donor in the catalytic mechanism. An a 6-sulfo-alpha-D-quinovosyldiacylglycerol-binding site is contributed by His-537.

Belongs to the glycosyl hydrolase 31 family.

The enzyme catalyses a 6-sulfo-alpha-D-quinovosyldiacylglycerol + H2O = 6-sulfo-alpha-D-quinovose + a 1,2-diacyl-sn-glycerol. The catalysed reaction is 3-(6-sulfo-alpha-D-quinovosyl)glycerol + H2O = 6-sulfo-alpha-D-quinovose + glycerol. Its pathway is glycolipid metabolism. Is inactivated in vitro by the mechanism-based inactivator 5-fluoro-beta-L-idopyranosyl fluoride (5FIdoF) that yields a covalent glycosyl-enzyme complex with the active site nucleophile Asp-405. In terms of biological role, catalyzes the hydrolysis of sulfoquinovosyl diacylglycerides (SQDG) to sulfoquinovose (SQ), which is then degraded by E.coli through the SQ Embden-Meyerhof-Parnas (SQ-EMP) sulfoglycolysis pathway as a source of carbon and sulfur. Therefore, is likely involved in the utilization of the sulfoquinovose headgroup found in ubiquitous plant sulfolipids. Is also able to hydrolyze simple sulfoquinovosides such as sulfoquinovosyl glycerol (SQGro). In vitro, can use the substrate analog para-nitrophenyl alpha-sulfoquinovoside (PNPSQ), but shows no detectable activity toward 4-nitrophenyl alpha-D-glucopyranoside (PNPGlc). Is a retaining glycoside hydrolase, since it forms the alpha anomer of SQ. Also exhibits some alpha-glucosidase activity against alpha-glucosyl fluoride in vitro, although natural substrates, such as alpha-glucobioses are scarcely hydrolyzed. The sequence is that of Sulfoquinovosidase from Escherichia coli (strain K12).